We begin with the raw amino-acid sequence, 265 residues long: Short-chain dehydrogenase/reductase GME11373 (265 aa).

NADP(+) contacts are provided by isoleucine 26, aspartate 72, asparagine 99, and arginine 132. Active-site proton donor residues include serine 148 and serine 149. The NADP(+) site is built by tyrosine 163, lysine 167, and threonine 198. The active-site Proton acceptor is the tyrosine 163. Lysine 167 acts as the Lowers pKa of active site Tyr in catalysis.

This sequence belongs to the short-chain dehydrogenases/reductases (SDR) family.

The protein operates within secondary metabolite biosynthesis. Its function is as follows. Short-chain dehydrogenase/reductase; part of the gene cluster that mediates the biosynthesis of dibenzodioxocinones such as pestalotiollide B, a novel class of inhibitors against cholesterol ester transfer protein (CEPT). The biosynthesis initiates from condensation of acetate and malonate units catalyzed by the non-reducing PKS pks8/GME11356. Pks8/GME11356 lacks a thioesterase (TE) domain, which is important to the cyclizing of the third ring of atrochrysone carboxylic acid, and the esterase GME11355 might play the role of TE and catalyzes the cyclization reaction of the C ring. The lactamase-like protein GME11357 (or other beta-lactamases in Pestalotiopsis microspora) probably hydrolyzes the thioester bond between the ACP of pks8/GME11356 and the intermediate to release atrochrysone carboxylic acid, which is spontaneously dehydrates to form endocrocin anthrone. Endocrocin anthrone is further converted to emodin via the endocrocin intermediate. Emodin is then oxidized by several enzymes such as the Baeyer-Villiger oxidase GME11358, the oxidoreductase GME11367, the short chain dehydrogenase/reductase GME11373, as well as by other oxidoreductases from the cluster, to modify the A and C rings and open the B ring, and finally yield monodictyphenone. The prenyltransferase GME11375 may catalyze the addition reaction between the C5 side chains and the carbon bone of dibenzodioxocinones. The remaining biochemical reactions to the final product dibenzodioxocinones should be methylation catalyzed by methyltransferase GME11366 and reduction and lactonization reaction catalyzed by a series of oxidordeuctases. This is Short-chain dehydrogenase/reductase GME11373 from Pestalotiopsis microspora.